We begin with the raw amino-acid sequence, 142 residues long: Sorting nexin-3 (142 aa).

Residues 21 to 138 (NFLEIEVRNP…ASFIQDPNWD (118 aa)) form the PX domain. Residues Arg-64, Ser-66, Lys-90, Arg-95, and Arg-104 each contribute to the a 1,2-diacyl-sn-glycero-3-phospho-(1D-myo-inositol-3-phosphate) site.

The protein belongs to the sorting nexin family.

It localises to the cytoplasm. The protein resides in the golgi apparatus membrane. The protein localises to the prevacuolar compartment membrane. In terms of biological role, required for retention of late Golgi membrane proteins. Component of the retrieval machinery that functions by direct interaction with the cytosolic tails of certain TGN membrane proteins during the sorting/budding process at the prevacuolar compartment. Binds phosphatidylinositol 3-phosphate (PtdIns(P3)). This Aspergillus fumigatus (strain ATCC MYA-4609 / CBS 101355 / FGSC A1100 / Af293) (Neosartorya fumigata) protein is Sorting nexin-3 (snx3).